A 299-amino-acid chain; its full sequence is UPF0276 protein ABO_1518 (299 aa).

The protein belongs to the UPF0276 family.

In Alcanivorax borkumensis (strain ATCC 700651 / DSM 11573 / NCIMB 13689 / SK2), this protein is UPF0276 protein ABO_1518.